Consider the following 124-residue polypeptide: Urease subunit beta (124 aa).

The protein belongs to the urease beta subunit family. As to quaternary structure, heterotrimer of UreA (gamma), UreB (beta) and UreC (alpha) subunits. Three heterotrimers associate to form the active enzyme.

It localises to the cytoplasm. It catalyses the reaction urea + 2 H2O + H(+) = hydrogencarbonate + 2 NH4(+). The protein operates within nitrogen metabolism; urea degradation; CO(2) and NH(3) from urea (urease route): step 1/1. This is Urease subunit beta from Bacillus velezensis (strain DSM 23117 / BGSC 10A6 / LMG 26770 / FZB42) (Bacillus amyloliquefaciens subsp. plantarum).